The following is a 183-amino-acid chain: Peptide deformylase (183 aa).

Fe cation is bound by residues Cys110 and His153. Glu154 is a catalytic residue. His157 contributes to the Fe cation binding site.

This sequence belongs to the polypeptide deformylase family. Requires Fe(2+) as cofactor.

The catalysed reaction is N-terminal N-formyl-L-methionyl-[peptide] + H2O = N-terminal L-methionyl-[peptide] + formate. Removes the formyl group from the N-terminal Met of newly synthesized proteins. Requires at least a dipeptide for an efficient rate of reaction. N-terminal L-methionine is a prerequisite for activity but the enzyme has broad specificity at other positions. This Listeria welshimeri serovar 6b (strain ATCC 35897 / DSM 20650 / CCUG 15529 / CIP 8149 / NCTC 11857 / SLCC 5334 / V8) protein is Peptide deformylase.